The primary structure comprises 58 residues: ATP synthase F(0) complex subunit k, mitochondrial (58 aa).

K16 and K17 each carry N6-acetyllysine. A helical membrane pass occupies residues 23–45 (TLTGRMNCVLATYGGIALLVLYF).

Component of the ATP synthase complex composed at least of ATP5F1A/subunit alpha, ATP5F1B/subunit beta, ATP5MC1/subunit c (homooctomer), MT-ATP6/subunit a, MT-ATP8/subunit 8, ATP5ME/subunit e, ATP5MF/subunit f, ATP5MG/subunit g, ATP5MK/subunit k, ATP5MJ/subunit j, ATP5F1C/subunit gamma, ATP5F1D/subunit delta, ATP5F1E/subunit epsilon, ATP5PF/subunit F6, ATP5PB/subunit b, ATP5PD/subunit d, ATP5PO/subunit OSCP. ATP synthase complex consists of a soluble F(1) head domain (subunits alpha(3) and beta(3)) - the catalytic core - and a membrane F(0) domain - the membrane proton channel (subunits c, a, 8, e, f, g, k and j). These two domains are linked by a central stalk (subunits gamma, delta, and epsilon) rotating inside the F1 region and a stationary peripheral stalk (subunits F6, b, d, and OSCP). The ATP synthase complex/complex V exists as a monomeric and a dimeric supercomplex that helps shape mitochondrial cristae to optimize proton flow.

It is found in the mitochondrion membrane. In terms of biological role, subunit k, of the mitochondrial membrane ATP synthase complex (F(1)F(0) ATP synthase or Complex V) that produces ATP from ADP in the presence of a proton gradient across the membrane which is generated by electron transport complexes of the respiratory chain. ATP synthase complex consist of a soluble F(1) head domain - the catalytic core - and a membrane F(1) domain - the membrane proton channel. These two domains are linked by a central stalk rotating inside the F(1) region and a stationary peripheral stalk. During catalysis, ATP synthesis in the catalytic domain of F(1) is coupled via a rotary mechanism of the central stalk subunits to proton translocation. In vivo, can only synthesize ATP although its ATP hydrolase activity can be activated artificially in vitro. Part of the complex F(0) domain. Required for dimerization of the ATP synthase complex and as such regulates ATP synthesis in the mitochondria. This Mus musculus (Mouse) protein is ATP synthase F(0) complex subunit k, mitochondrial.